An 86-amino-acid polypeptide reads, in one-letter code: Small ribosomal subunit protein bS16 (86 aa).

The protein belongs to the bacterial ribosomal protein bS16 family.

The protein is Small ribosomal subunit protein bS16 of Borreliella afzelii (strain PKo) (Borrelia afzelii).